We begin with the raw amino-acid sequence, 382 residues long: Dual-specificity RNA methyltransferase RlmN (382 aa).

Glutamate 91 functions as the Proton acceptor in the catalytic mechanism. The Radical SAM core domain occupies 97-339 (ETDRGTLCIS…TTVRKTRGDD (243 aa)). Cysteine 104 and cysteine 344 form a disulfide bridge. [4Fe-4S] cluster is bound by residues cysteine 111, cysteine 115, and cysteine 118. Residues 165–166 (GE), serine 197, 219–221 (SLH), and asparagine 301 each bind S-adenosyl-L-methionine. The S-methylcysteine intermediate role is filled by cysteine 344.

It belongs to the radical SAM superfamily. RlmN family. [4Fe-4S] cluster is required as a cofactor.

The protein resides in the cytoplasm. The catalysed reaction is adenosine(2503) in 23S rRNA + 2 reduced [2Fe-2S]-[ferredoxin] + 2 S-adenosyl-L-methionine = 2-methyladenosine(2503) in 23S rRNA + 5'-deoxyadenosine + L-methionine + 2 oxidized [2Fe-2S]-[ferredoxin] + S-adenosyl-L-homocysteine. It carries out the reaction adenosine(37) in tRNA + 2 reduced [2Fe-2S]-[ferredoxin] + 2 S-adenosyl-L-methionine = 2-methyladenosine(37) in tRNA + 5'-deoxyadenosine + L-methionine + 2 oxidized [2Fe-2S]-[ferredoxin] + S-adenosyl-L-homocysteine. In terms of biological role, specifically methylates position 2 of adenine 2503 in 23S rRNA and position 2 of adenine 37 in tRNAs. m2A2503 modification seems to play a crucial role in the proofreading step occurring at the peptidyl transferase center and thus would serve to optimize ribosomal fidelity. The protein is Dual-specificity RNA methyltransferase RlmN of Polaromonas sp. (strain JS666 / ATCC BAA-500).